A 142-amino-acid chain; its full sequence is Large ribosomal subunit protein bL21 (142 aa).

Residues 74–84 are compositionally biased toward basic residues; it reads RRRQNSKRTRG. The tract at residues 74–142 is disordered; that stretch reads RRRQNSKRTR…KAAAKAESAE (69 aa). Residues 107 to 125 show a composition bias toward basic and acidic residues; it reads KAAEKKAPKADAAEGEAAK. Over residues 126–135 the composition is skewed to basic residues; it reads PKKAAPKKAA.

This sequence belongs to the bacterial ribosomal protein bL21 family. In terms of assembly, part of the 50S ribosomal subunit. Contacts protein L20.

This protein binds to 23S rRNA in the presence of protein L20. This is Large ribosomal subunit protein bL21 from Brucella melitensis biotype 2 (strain ATCC 23457).